A 446-amino-acid chain; its full sequence is Probable ribosomal RNA small subunit methyltransferase B (446 aa).

S-adenosyl-L-methionine contacts are provided by residues 260-266, Asp-284, Asp-311, and Asp-330; that span reads CAAPGGK. Cys-383 serves as the catalytic Nucleophile.

It belongs to the class I-like SAM-binding methyltransferase superfamily. RsmB/NOP family.

The protein localises to the cytoplasm. The enzyme catalyses cytidine(967) in 16S rRNA + S-adenosyl-L-methionine = 5-methylcytidine(967) in 16S rRNA + S-adenosyl-L-homocysteine + H(+). Specifically methylates the cytosine at position 967 (m5C967) of 16S rRNA. The sequence is that of Probable ribosomal RNA small subunit methyltransferase B from Synechocystis sp. (strain ATCC 27184 / PCC 6803 / Kazusa).